The following is a 469-amino-acid chain: DNA (cytosine-5-)-methyltransferase M.ApeKI (469 aa).

One can recognise an SAM-dependent MTase C5-type domain in the interval 4 to 469; that stretch reads YSTISLFSGA…EALAEVLDAV (466 aa). Cys-93 is an active-site residue.

This sequence belongs to the class I-like SAM-binding methyltransferase superfamily. C5-methyltransferase family.

The enzyme catalyses a 2'-deoxycytidine in DNA + S-adenosyl-L-methionine = a 5-methyl-2'-deoxycytidine in DNA + S-adenosyl-L-homocysteine + H(+). Its function is as follows. Cytosine methylase that recognizes the double-stranded sequence 5'-GC(A/T)GC-3', methylates C-5 position of the second cytosine on both strands, and protects the DNA from cleavage by the ApeKI endonuclease. This Aeropyrum pernix (strain ATCC 700893 / DSM 11879 / JCM 9820 / NBRC 100138 / K1) protein is DNA (cytosine-5-)-methyltransferase M.ApeKI.